We begin with the raw amino-acid sequence, 1372 residues long: DNA-directed RNA polymerase subunit beta' (1372 aa).

Zn(2+)-binding residues include C69, C71, C84, and C87. Residues D460, D462, and D464 each coordinate Mg(2+). The Zn(2+) site is built by C808, C882, C889, and C892.

It belongs to the RNA polymerase beta' chain family. In terms of assembly, the RNAP catalytic core consists of 2 alpha, 1 beta, 1 beta' and 1 omega subunit. When a sigma factor is associated with the core the holoenzyme is formed, which can initiate transcription. Mg(2+) is required as a cofactor. Requires Zn(2+) as cofactor.

The enzyme catalyses RNA(n) + a ribonucleoside 5'-triphosphate = RNA(n+1) + diphosphate. Its function is as follows. DNA-dependent RNA polymerase catalyzes the transcription of DNA into RNA using the four ribonucleoside triphosphates as substrates. The protein is DNA-directed RNA polymerase subunit beta' of Rickettsia bellii (strain OSU 85-389).